A 339-amino-acid polypeptide reads, in one-letter code: Ribosomal RNA small subunit methyltransferase C (339 aa).

It belongs to the methyltransferase superfamily. RsmC family. In terms of assembly, monomer.

It is found in the cytoplasm. It carries out the reaction guanosine(1207) in 16S rRNA + S-adenosyl-L-methionine = N(2)-methylguanosine(1207) in 16S rRNA + S-adenosyl-L-homocysteine + H(+). Specifically methylates the guanine in position 1207 of 16S rRNA in the 30S particle. The polypeptide is Ribosomal RNA small subunit methyltransferase C (Aliivibrio fischeri (strain ATCC 700601 / ES114) (Vibrio fischeri)).